The following is a 38-amino-acid chain: Potassium channel toxin alpha-KTx 2.3 (38 aa).

3 disulfide bridges follow: C7–C29, C13–C34, and C17–C36.

This sequence belongs to the short scorpion toxin superfamily. Potassium channel inhibitor family. Alpha-KTx 02 subfamily. As to expression, expressed by the venom gland.

Its subcellular location is the secreted. Inhibitor of voltage-gated potassium channels (Kv). It is capable of displacing the binding of radio-labeled noxiustoxin (AC P08815) to rat brain synaptosomes with high affinity (about 100 pM). It is also capable of inhibiting transient potassium-currents (resembling I(A)-type currents), in cultured rat cerebellar granule cells. About 50% of the peak currents are reduced by application of a 1.5 uM solution of this toxin. The sequence is that of Potassium channel toxin alpha-KTx 2.3 from Centruroides limpidus (Mexican scorpion).